A 283-amino-acid chain; its full sequence is NADPH-dependent 7-cyano-7-deazaguanine reductase (283 aa).

Position 89–91 (89–91) interacts with substrate; sequence IES. 91–92 lines the NADPH pocket; sequence SK. C190 acts as the Thioimide intermediate in catalysis. The active-site Proton donor is the D197. 229–230 contacts substrate; it reads HE. 258–259 contacts NADPH; the sequence is RG.

Belongs to the GTP cyclohydrolase I family. QueF type 2 subfamily. As to quaternary structure, homodimer.

The protein resides in the cytoplasm. It carries out the reaction 7-aminomethyl-7-carbaguanine + 2 NADP(+) = 7-cyano-7-deazaguanine + 2 NADPH + 3 H(+). Its pathway is tRNA modification; tRNA-queuosine biosynthesis. Its function is as follows. Catalyzes the NADPH-dependent reduction of 7-cyano-7-deazaguanine (preQ0) to 7-aminomethyl-7-deazaguanine (preQ1). This is NADPH-dependent 7-cyano-7-deazaguanine reductase from Aromatoleum aromaticum (strain DSM 19018 / LMG 30748 / EbN1) (Azoarcus sp. (strain EbN1)).